A 177-amino-acid polypeptide reads, in one-letter code: Large ribosomal subunit protein uL6 (177 aa).

Belongs to the universal ribosomal protein uL6 family. Part of the 50S ribosomal subunit.

This protein binds to the 23S rRNA, and is important in its secondary structure. It is located near the subunit interface in the base of the L7/L12 stalk, and near the tRNA binding site of the peptidyltransferase center. The chain is Large ribosomal subunit protein uL6 from Hahella chejuensis (strain KCTC 2396).